The chain runs to 202 residues: Tumor necrosis factor alpha-induced protein 8-like protein 3 (202 aa).

Over residues 1 to 10 (MDTDSGDLSE) the composition is skewed to acidic residues. The interval 1-24 (MDTDSGDLSEGELSPGPEQFSSKS) is disordered.

Belongs to the TNFAIP8 family.

It localises to the cytoplasm. It is found in the cell membrane. In terms of biological role, may act as a lipid transfer protein. The sequence is that of Tumor necrosis factor alpha-induced protein 8-like protein 3 (tnfaip8l3) from Xenopus laevis (African clawed frog).